Here is a 458-residue protein sequence, read N- to C-terminus: Transmembrane protein 143 (458 aa).

2 helical membrane-spanning segments follow: residues 277 to 297 (LLNL…GMVI) and 298 to 318 (LSDL…FMGV). Phosphoserine is present on S329.

The protein resides in the membrane. This Mus musculus (Mouse) protein is Transmembrane protein 143 (Tmem143).